The chain runs to 203 residues: Superoxide dismutase [Mn] (203 aa).

4 residues coordinate Mn(2+): His27, His81, Asp164, and His168.

The protein belongs to the iron/manganese superoxide dismutase family. Requires Mn(2+) as cofactor.

It carries out the reaction 2 superoxide + 2 H(+) = H2O2 + O2. Destroys superoxide anion radicals which are normally produced within the cells and which are toxic to biological systems. The polypeptide is Superoxide dismutase [Mn] (sodA) (Xanthomonas campestris pv. campestris (strain 8004)).